A 377-amino-acid chain; its full sequence is 23S rRNA (uracil(747)-C(5))-methyltransferase RlmC (377 aa).

Positions 3, 11, 14, and 87 each coordinate [4Fe-4S] cluster. S-adenosyl-L-methionine is bound by residues Gln-212, Phe-241, Glu-262, and Asn-307. Catalysis depends on Cys-334, which acts as the Nucleophile.

It belongs to the class I-like SAM-binding methyltransferase superfamily. RNA M5U methyltransferase family. RlmC subfamily.

It carries out the reaction uridine(747) in 23S rRNA + S-adenosyl-L-methionine = 5-methyluridine(747) in 23S rRNA + S-adenosyl-L-homocysteine + H(+). In terms of biological role, catalyzes the formation of 5-methyl-uridine at position 747 (m5U747) in 23S rRNA. The sequence is that of 23S rRNA (uracil(747)-C(5))-methyltransferase RlmC from Xenorhabdus bovienii (strain SS-2004) (Xenorhabdus nematophila subsp. bovienii).